Consider the following 594-residue polypeptide: MGTARIAPGLALLLCCPVLSSAYALVDADDVMTKEEQIFLLHRAQAQCGKRLKEVLQRPADIMESDKGWTSASTSGKPRKDKASGKLYPESEEDKEAPTDSRYRGRPCLPEWDHILCWPLGAPQGEVVAVPCPDYIYDFNHKGHAYRRCDRNGSWELVPGHNRTWANYSECVQFLTNETREREVFDRLGMIYTVGYSMSLASLTVAVLILAYFRRLHCTRNYIHMHLFLSFMLRAVSIFVKDAVLYSGATLDEAERLTEEELRAIAQAPPPPATAAAGYAGCRVAVTFFLYFLATNYYWILVEGLYLHSLIFMAFFSEKKYLWGFTVFGWGLPAVFVAVWVSVRATLANTGCWDLSSGNKKWIIQVPILASIVLHFILFINIVRVLATKLRETNAGRCDTRQQYRKLLKSTLVLMPLFGVHYIVFMATPYTEVSGTLWQVQMHYEMLFNSFQGFFVAIIYCFCNGEVQAEIKKSWSRWTLALDFKRKARSGSSSYSYGPMVSHTSVTNVGPRVGLGLPLSPRLLPTATTNGHPQLPGHAKPGTPALETLETTPPATAAPKDDGFLNGSCSGLDEEASGPEQPPALLQEEWETVM.

Residues 1 to 28 (MGTARIAPGLALLLCCPVLSSAYALVDA) form the signal peptide. At 29–188 (DDVMTKEEQI…TREREVFDRL (160 aa)) the chain is on the extracellular side. Intrachain disulfides connect Cys48–Cys117, Cys108–Cys149, and Cys132–Cys171. The interval 66-102 (DKGWTSASTSGKPRKDKASGKLYPESEEDKEAPTDSR) is disordered. N-linked (GlcNAc...) asparagine glycans are attached at residues Asn152, Asn162, Asn167, and Asn177. The helical transmembrane segment at 189 to 209 (GMIYTVGYSMSLASLTVAVLI) threads the bilayer. At 210 to 223 (LAYFRRLHCTRNYI) the chain is on the cytoplasmic side. Residues 224–244 (HMHLFLSFMLRAVSIFVKDAV) form a helical membrane-spanning segment. Residues 245-295 (LYSGATLDEAERLTEEELRAIAQAPPPPATAAAGYAGCRVAVTFFLYFLAT) lie on the Extracellular side of the membrane. A helical membrane pass occupies residues 296–316 (NYYWILVEGLYLHSLIFMAFF). Residues 317 to 319 (SEK) are Cytoplasmic-facing. A helical transmembrane segment spans residues 320 to 340 (KYLWGFTVFGWGLPAVFVAVW). The Extracellular segment spans residues 341 to 361 (VSVRATLANTGCWDLSSGNKK). Residues 362 to 382 (WIIQVPILASIVLHFILFINI) traverse the membrane as a helical segment. The Cytoplasmic segment spans residues 383–405 (VRVLATKLRETNAGRCDTRQQYR). A helical membrane pass occupies residues 406-426 (KLLKSTLVLMPLFGVHYIVFM). At 427 to 440 (ATPYTEVSGTLWQV) the chain is on the extracellular side. Residues 441-461 (QMHYEMLFNSFQGFFVAIIYC) traverse the membrane as a helical segment. At 462 to 594 (FCNGEVQAEI…LLQEEWETVM (133 aa)) the chain is on the cytoplasmic side. Residues 475 to 478 (WSRW) carry the Important for interaction with G proteins motif. Positions 525 to 594 (PTATTNGHPQ…LLQEEWETVM (70 aa)) are disordered. The span at 543 to 558 (TPALETLETTPPATAA) shows a compositional bias: low complexity. Residue Thr552 is modified to Phosphothreonine.

This sequence belongs to the G-protein coupled receptor 2 family. In terms of assembly, homodimer in the absence of bound ligand. Peptide hormone binding leads to dissociation of the homodimer. Post-translationally, N-glycosylated.

The protein resides in the cell membrane. In terms of biological role, G-protein-coupled receptor for parathyroid hormone (PTH) and for parathyroid hormone-related peptide (PTHLH). Ligand binding causes a conformation change that triggers signaling via guanine nucleotide-binding proteins (G proteins) and modulates the activity of downstream effectors, such as adenylate cyclase (cAMP). PTH1R is coupled to G(s) G alpha proteins and mediates activation of adenylate cyclase activity. PTHLH dissociates from PTH1R more rapidly than PTH; as consequence, the cAMP response induced by PTHLH decays faster than the response induced by PTH. The chain is Parathyroid hormone/parathyroid hormone-related peptide receptor (PTH1R) from Pongo abelii (Sumatran orangutan).